The following is a 759-amino-acid chain: Short transient receptor potential channel 1 (759 aa).

A disordered region spans residues 1–30 (MMAALYPSTDLSGVSSSSLPSSPSSSSPNE). Topologically, residues 1 to 311 (MMAALYPSTD…FGQMSGYRRK (311 aa)) are cytoplasmic. The span at 15–28 (SSSSLPSSPSSSSP) shows a compositional bias: low complexity. ANK repeat units lie at residues 46-75 (LNEKLFLLACDKGDYYMVKKILEENSSGDL), 83-109 (LGRNAVTITIENESLDILQLLLDYGCQ), and 124-146 (MDVAPVILAAHRNNYEILTMLLK). Positions 155, 159, 161, and 164 each coordinate Zn(2+). An intramembrane region (discontinuously helical) is located at residues 312–345 (PTCKKIMTVLTVGIFWPVLSLCYLIAPKSQFGRI). Topologically, residues 346–352 (IHTPFMK) are cytoplasmic. Residues 353 to 370 (FIIHGASYFTFLLLLNLY) traverse the membrane as a helical segment. Topologically, residues 371–388 (SLVYNEDKKNTMGPALER) are extracellular. The helical transmembrane segment at 389–405 (IDYLLILWIIGMIWSDI) threads the bilayer. Topologically, residues 406–421 (KRLWYEGLEDFLEESR) are cytoplasmic. The chain crosses the membrane as a helical span at residues 422–441 (NQLSFVMNSLYLATFALKVV). The Extracellular segment spans residues 442–462 (AHNKFHDFADRKDWDAFHPTL). A helical transmembrane segment spans residues 463 to 483 (VAEGLFAFANVLSYLRLFFMY). The Cytoplasmic segment spans residues 484–502 (TTSSILGPLQISMGQMLQD). Residues 503 to 524 (FGKFLGMFLLVLFSFTIGLTQL) traverse the membrane as a helical segment. Residues 525-589 (YDKGYTSKEQ…GEELQSFVGA (65 aa)) are Extracellular-facing. A disulfide bridge links C537 with C542. The chain crosses the membrane as a helical span at residues 590–610 (VIVGTYNVVVVIVLTKLLVAM). Residues 611–759 (LHKSFQLIAN…SKYAMFYPKN (149 aa)) lie on the Cytoplasmic side of the membrane.

This sequence belongs to the transient receptor (TC 1.A.4) family. STrpC subfamily. TRPC1 sub-subfamily. Heterotetramer with TRPC4 and/or TRPC5. Forms a heteromeric ion channel with TRPC4, with a 1:3 TRPC1:TRPC4 stoichiometry. Unlike other TRP channel proteins, does not form a homomeric channel. Interacts with TRPC4AP. Interacts with ITPR3. Interacts with MX1 and RNF24. Interacts with FKBP4. Interacts with PLSCR1. Interacts with PKD2L2. Forms a heterotetramer with PKD2 with a 2:2 stoichiometry; has distinct channel properties separate from PKD2 or TRPC1 homomers alone. In terms of processing, activation of PRKCA induces phosphorylation of TRPC1 and subsequent Ca2+ entry into cells. In terms of tissue distribution, expressed in brain, hippocampus, amygdala, Purkinje cells and single neurons in the cortex and striatum.

Its subcellular location is the cell membrane. It carries out the reaction Ca(2+)(in) = Ca(2+)(out). The enzyme catalyses Na(+)(in) = Na(+)(out). The catalysed reaction is Li(+)(in) = Li(+)(out). It catalyses the reaction Cs(+)(in) = Cs(+)(out). Its activity is regulated as follows. May be operated by a phosphatidylinositol second messenger system activated by receptor tyrosine kinases or G-protein coupled receptors. Also activated by intracellular calcium store depletion. Functionally, forms a receptor-activated non-selective calcium permeant cation channel. Forms a heteromeric ion channel with TRPC4 or TRPC5 that has reduced calcium permeability compared to the homomeric TRPC4 or TRPC5 channel. Also permeable to monovalent ions including sodium, lithium and cesium ions. The sequence is that of Short transient receptor potential channel 1 (Trpc1) from Rattus norvegicus (Rat).